We begin with the raw amino-acid sequence, 104 residues long: Large ribosomal subunit protein uL24 (104 aa).

This sequence belongs to the universal ribosomal protein uL24 family. As to quaternary structure, part of the 50S ribosomal subunit.

Functionally, one of two assembly initiator proteins, it binds directly to the 5'-end of the 23S rRNA, where it nucleates assembly of the 50S subunit. In terms of biological role, one of the proteins that surrounds the polypeptide exit tunnel on the outside of the subunit. The chain is Large ribosomal subunit protein uL24 from Corynebacterium aurimucosum (strain ATCC 700975 / DSM 44827 / CIP 107346 / CN-1) (Corynebacterium nigricans).